The chain runs to 405 residues: Deoxyguanosinetriphosphate triphosphohydrolase-like protein (405 aa).

The 145-residue stretch at 75-219 (RLTHTIEVAQ…AAVADDIAYN (145 aa)) folds into the HD domain.

The protein belongs to the dGTPase family. Type 2 subfamily.

The sequence is that of Deoxyguanosinetriphosphate triphosphohydrolase-like protein from Allorhizobium ampelinum (strain ATCC BAA-846 / DSM 112012 / S4) (Agrobacterium vitis (strain S4)).